We begin with the raw amino-acid sequence, 121 residues long: Large ribosomal subunit protein uL18 (121 aa).

It belongs to the universal ribosomal protein uL18 family. Part of the 50S ribosomal subunit; part of the 5S rRNA/L5/L18/L25 subcomplex. Contacts the 5S and 23S rRNAs.

This is one of the proteins that bind and probably mediate the attachment of the 5S RNA into the large ribosomal subunit, where it forms part of the central protuberance. This Ehrlichia canis (strain Jake) protein is Large ribosomal subunit protein uL18.